A 182-amino-acid polypeptide reads, in one-letter code: UPF0397 protein BCG9842_B2659 (182 aa).

Transmembrane regions (helical) follow at residues 9–29 (VVAIGIGAALYGILGLWGFSI), 40–60 (AILTVFGALFGPVAGLLIGLI), 71–91 (WGIWWGWVISSGIIGFSMGLI), 114–134 (ITGLVGIVIAIIFAGAFDIIV), and 142–162 (IVIQVLGATISDVIVFLVLGL).

This sequence belongs to the UPF0397 family.

It localises to the cell membrane. The sequence is that of UPF0397 protein BCG9842_B2659 from Bacillus cereus (strain G9842).